Consider the following 1311-residue polypeptide: Clustered mitochondria protein homolog (1311 aa).

A compositionally biased stretch (low complexity) spans 1-18; it reads MAEKTNGAAAPNGAADAP. The disordered stretch occupies residues 1–27; sequence MAEKTNGAAAPNGAADAPKSSPEQAQD. The Clu domain occupies 324-568; sequence DITRTQESFL…RITPLDVSWQ (245 aa). A TPR 1 repeat occupies 491–525; that stretch reads IDYGAVDGKDLVATDERFVPQFQKLSKALKVKPHA. Residues 606 to 630 show a composition bias toward basic and acidic residues; the sequence is SEVAKRGQAKKDQAAVEEKKEAKAE. Disordered regions lie at residues 606–694 and 925–966; these read SEVA…SSDR and PAPV…SSTI. Acidic residues predominate over residues 631 to 661; it reads SEEDSDSSSEEESSSDESDSEESSSDEDEEE. Over residues 665 to 675 the composition is skewed to basic residues; it reads PKKKSVPKKAA. Positions 676–694 are enriched in basic and acidic residues; the sequence is KKEEVKEEKKDEKEASSDR. TPR repeat units follow at residues 1034–1067, 1076–1109, and 1118–1151; these read ARVYHSLAMLYFQLEEKDAAVELARKAVIVAERT, LLDYLNLSLFLYQLGDSKQALEFTKHALNMWKII, and ITTINNAAVMLQQLKEYHESRRWFEEALRICEVV. Positions 1276-1286 are enriched in basic and acidic residues; the sequence is LKFIEGTDKQK. The disordered stretch occupies residues 1276 to 1311; sequence LKFIEGTDKQKKPAAKKRTGRANPKRRGAEPVSTKA. Over residues 1287–1301 the composition is skewed to basic residues; sequence KPAAKKRTGRANPKR.

This sequence belongs to the CLU family. May associate with the eukaryotic translation initiation factor 3 (eIF-3) complex.

The protein localises to the cytoplasm. Its function is as follows. mRNA-binding protein involved in proper cytoplasmic distribution of mitochondria. The polypeptide is Clustered mitochondria protein homolog (Pyricularia oryzae (strain 70-15 / ATCC MYA-4617 / FGSC 8958) (Rice blast fungus)).